The following is a 486-amino-acid chain: G2/mitotic-specific cyclin-4 (486 aa).

Disordered stretches follow at residues 1 to 80 (MRSY…SSNK) and 105 to 126 (VLLN…DKEN). Residues 25-41 (ANLSSNHTTAGQPSTSS) are compositionally biased toward polar residues. Residues 108 to 123 (NDDDDETDDEFDDEED) are compositionally biased toward acidic residues. The stretch at 122–184 (EDKENRYHDL…QSHTQDMRSI (63 aa)) forms a coiled coil. Residues 234–359 (EIFNYLHELE…FMIDVLEFDL (126 aa)) enclose the Cyclin N-terminal domain.

It belongs to the cyclin family. Cyclin AB subfamily. As to quaternary structure, interacts with IQG1.

Its function is as follows. 2/mitotic-specific cyclin essential for the control of the cell cycle at the G2/M (mitosis) transition. G2/M cyclins accumulate steadily during G2 and are abruptly destroyed at mitosis. Degradation is necessary for the cell to exit from mitosis. Plays a role in morphogenesis by negatively regulating polarized growth. Through binding to CDC28 regulates cytokinesis, partly by phosphorylation of the actomyosin ring component IQG1. This is G2/mitotic-specific cyclin-4 (CLB4) from Candida albicans (strain SC5314 / ATCC MYA-2876) (Yeast).